Reading from the N-terminus, the 271-residue chain is 3-methyl-2-oxobutanoate hydroxymethyltransferase (271 aa).

2 residues coordinate Mg(2+): Asp53 and Asp92. Residues Asp53–Ser54, Asp92, and Lys120 each bind 3-methyl-2-oxobutanoate. Glu122 is a binding site for Mg(2+). Residue Glu189 is the Proton acceptor of the active site.

It belongs to the PanB family. In terms of assembly, homodecamer; pentamer of dimers. Mg(2+) serves as cofactor.

The protein localises to the cytoplasm. The enzyme catalyses 3-methyl-2-oxobutanoate + (6R)-5,10-methylene-5,6,7,8-tetrahydrofolate + H2O = 2-dehydropantoate + (6S)-5,6,7,8-tetrahydrofolate. The protein operates within cofactor biosynthesis; (R)-pantothenate biosynthesis; (R)-pantoate from 3-methyl-2-oxobutanoate: step 1/2. Functionally, catalyzes the reversible reaction in which hydroxymethyl group from 5,10-methylenetetrahydrofolate is transferred onto alpha-ketoisovalerate to form ketopantoate. The protein is 3-methyl-2-oxobutanoate hydroxymethyltransferase of Paraburkholderia xenovorans (strain LB400).